The primary structure comprises 75 residues: uncharacterized protein (75 aa).

The first 19 residues, 1–19, serve as a signal peptide directing secretion; that stretch reads MKKTAAIISACMLTFALSA. Cysteine 20 is lipidated: N-palmitoyl cysteine. The S-diacylglycerol cysteine moiety is linked to residue cysteine 20.

To E.coli YgdR.

The protein localises to the cell membrane. This is an uncharacterized protein from Escherichia coli O6:H1 (strain CFT073 / ATCC 700928 / UPEC).